Reading from the N-terminus, the 431-residue chain is tRNA-2-methylthio-N(6)-dimethylallyladenosine synthase (431 aa).

The region spanning 2-117 (KKLFIETLGC…ITEVVDKKHA (116 aa)) is the MTTase N-terminal domain. The [4Fe-4S] cluster site is built by Cys-11, Cys-48, Cys-80, Cys-149, Cys-153, and Cys-156. The 234-residue stretch at 135–368 (RTNPFKAMVN…QTRHTEILDE (234 aa)) folds into the Radical SAM core domain. In terms of domain architecture, TRAM spans 371–431 (DAQLGKVHEV…SRGALDGVLV (61 aa)).

This sequence belongs to the methylthiotransferase family. MiaB subfamily. In terms of assembly, monomer. [4Fe-4S] cluster is required as a cofactor.

It localises to the cytoplasm. The catalysed reaction is N(6)-dimethylallyladenosine(37) in tRNA + (sulfur carrier)-SH + AH2 + 2 S-adenosyl-L-methionine = 2-methylsulfanyl-N(6)-dimethylallyladenosine(37) in tRNA + (sulfur carrier)-H + 5'-deoxyadenosine + L-methionine + A + S-adenosyl-L-homocysteine + 2 H(+). Catalyzes the methylthiolation of N6-(dimethylallyl)adenosine (i(6)A), leading to the formation of 2-methylthio-N6-(dimethylallyl)adenosine (ms(2)i(6)A) at position 37 in tRNAs that read codons beginning with uridine. The polypeptide is tRNA-2-methylthio-N(6)-dimethylallyladenosine synthase (Sulfurovum sp. (strain NBC37-1)).